Consider the following 350-residue polypeptide: Carbamoyl dehydratase HypE (350 aa).

Cys-350 is subject to S-carbamoylcysteine. Cys-350 bears the S-cyanocysteine mark.

Belongs to the HypE family. In terms of processing, modified by HypF, which adds a carboxamido group to the thiolate of the C-terminal cysteine, yielding a protein-S-carboxamide. The carboxamido group is then dehydrated by HypE itself to yield a protein-thiocyanate.

It carries out the reaction C-terminal S-carboxamide-L-cysteinyl-[HypE protein] + ATP = C-terminal S-cyanate-L-cysteinyl-[HypE protein] + ADP + phosphate + H(+). It participates in protein modification; [NiFe] hydrogenase maturation. Functionally, involved in the maturation of [NiFe] hydrogenases. Along with HypF, it catalyzes the synthesis of the CN ligands of the active site iron of [NiFe]-hydrogenases. HypE catalyzes the ATP-dependent dehydration of the carboxamido group attached to its C-terminal cysteine to a cyano group. This is Carbamoyl dehydratase HypE from Rhizobium leguminosarum bv. viciae.